A 343-amino-acid polypeptide reads, in one-letter code: CRISPR-associated endonuclease Cas1 1 (343 aa).

Mn(2+) contacts are provided by Glu-166, His-234, and Glu-249.

It belongs to the CRISPR-associated endonuclease Cas1 family. As to quaternary structure, homodimer, forms a heterotetramer with a Cas2 homodimer. Mg(2+) serves as cofactor. The cofactor is Mn(2+).

In terms of biological role, CRISPR (clustered regularly interspaced short palindromic repeat), is an adaptive immune system that provides protection against mobile genetic elements (viruses, transposable elements and conjugative plasmids). CRISPR clusters contain spacers, sequences complementary to antecedent mobile elements, and target invading nucleic acids. CRISPR clusters are transcribed and processed into CRISPR RNA (crRNA). Acts as a dsDNA endonuclease. Involved in the integration of spacer DNA into the CRISPR cassette. The chain is CRISPR-associated endonuclease Cas1 1 from Chlorobaculum tepidum (strain ATCC 49652 / DSM 12025 / NBRC 103806 / TLS) (Chlorobium tepidum).